We begin with the raw amino-acid sequence, 480 residues long: Iron-sulfur cluster assembly SufBD family protein slr0074 (480 aa).

It belongs to the iron-sulfur cluster assembly SufBD family.

This is Iron-sulfur cluster assembly SufBD family protein slr0074 from Synechocystis sp. (strain ATCC 27184 / PCC 6803 / Kazusa).